The following is a 449-amino-acid chain: MGLLLLLSLLSACFQPRYAPTWDSLDQRPLPSWYDEAKFGIFMHWGVFSVPSFGSEWFWWDWKGAHDQNFIKDFMKRNYPPGFRYADFAPMFTAEWYNPLQWAEVLQASGAKYVVLTSKHHEGFTNWPSKYSWNWNSVDNGPHRDLVGELAMAIRNNSDLHFGLYYSLFEWFHPLYLKDKQNKWTTQDYTKDVGLAELYELVNAYHPEVVWSDGDWEAPYTYWNSTNFLAWLYNDSPVKDTVVTNDRWGSGMLCHHGGYYTCSDRYNPGVLQKHKWENCMTIDKKSWGFRREATLADYLDMDDLVKILAETVSCGGNLLMNIGPTHDGRIVPIFEERLRSMGKWLQVNGDAIYATKPWRAQNDTRESGVWYTSKNDSVYAIVLDWPNSGQLTLGVPRSSPTTTVTMLGWAAPLKWVAVSGSGITVQMPTASSNQLPCQWAWVIRMKGVM.

The N-terminal stretch at 1-19 is a signal peptide; the sequence is MGLLLLLSLLSACFQPRYA. N-linked (GlcNAc...) asparagine glycosylation is found at N156, N224, N362, and N375.

The protein belongs to the glycosyl hydrolase 29 family. As to quaternary structure, homotetramer.

It localises to the secreted. The catalysed reaction is an alpha-L-fucoside + H2O = L-fucose + an alcohol. In terms of biological role, alpha-L-fucosidase is responsible for hydrolyzing the alpha-1,6-linked fucose joined to the reducing-end N-acetylglucosamine of the carbohydrate moieties of glycoproteins. The sequence is that of Alpha-L-fucosidase from Branchiostoma floridae (Florida lancelet).